The following is a 153-amino-acid chain: uncharacterized protein (153 aa).

The segment at isoleucine 17–asparagine 78 is disordered. A compositionally biased stretch (basic residues) spans proline 22–proline 38.

This is an uncharacterized protein from Saccharomyces cerevisiae (strain ATCC 204508 / S288c) (Baker's yeast).